A 120-amino-acid polypeptide reads, in one-letter code: MVKLTSIAAGVAAIAATASATTTLAQSDERVNLVELGVYVSDIRAHLAQYYMFQAAHPTETYPVEVAEAVFNYGDFTTMLTGIAPDQVTRMITGVPWYSSRLKPAISSALSKDGIYTITN.

A signal peptide spans 1–25 (MVKLTSIAAGVAAIAATASATTTLA).

It belongs to the SRP1/TIP1 family. Seripauperin subfamily.

This Saccharomyces cerevisiae (strain ATCC 204508 / S288c) (Baker's yeast) protein is Seripauperin-13 (PAU13).